Consider the following 492-residue polypeptide: Sestrin-3 (492 aa).

An N-terminal domain; may mediate the alkylhydroperoxide reductase activity region spans residues 62-243; sequence LVEEYSTSGR…VCDLANDNSI (182 aa). Cysteine 121 functions as the Cysteine sulfenic acid (-SOH) intermediate in the catalytic mechanism. A C-terminal domain; mediates TORC1 regulation region spans residues 310 to 492; it reads PHSDFEDDVI…ALRAITRHLT (183 aa). Residues 386 to 389, threonine 398, and glutamate 463 each bind L-leucine; that span reads TYNT.

This sequence belongs to the sestrin family. Interacts with the GATOR2 complex which is composed of MIOS, SEC13, SEH1L, WDR24 and WDR59; the interaction is not regulated by leucine. Interacts with RRAGA, RRAGB, RRAGC and RRAGD; may function as a guanine nucleotide dissociation inhibitor for RRAGs and regulate them. Interacts with the TORC2 complex; through RICTOR. In terms of tissue distribution, detected in liver and skeletal muscles.

It is found in the cytoplasm. It catalyses the reaction a hydroperoxide + L-cysteinyl-[protein] = S-hydroxy-L-cysteinyl-[protein] + an alcohol. In terms of biological role, may function as an intracellular leucine sensor that negatively regulates the TORC1 signaling pathway. May also regulate the insulin-receptor signaling pathway through activation of TORC2. This metabolic regulator may also play a role in protection against oxidative and genotoxic stresses. May prevent the accumulation of reactive oxygen species (ROS) through the alkylhydroperoxide reductase activity born by the N-terminal domain of the protein. The chain is Sestrin-3 from Mus musculus (Mouse).